Reading from the N-terminus, the 119-residue chain is Fluoride-specific ion channel FluC (119 aa).

A run of 4 helical transmembrane segments spans residues 5 to 25 (IIPL…LNLA), 34 to 54 (TGNL…AETI), 59 to 79 (WKLL…GFSL), and 97 to 117 (IFLH…IGAA). Residues glycine 69 and threonine 72 each contribute to the Na(+) site.

It belongs to the fluoride channel Fluc/FEX (TC 1.A.43) family.

Its subcellular location is the cell inner membrane. The catalysed reaction is fluoride(in) = fluoride(out). Na(+) is not transported, but it plays an essential structural role and its presence is essential for fluoride channel function. Its function is as follows. Fluoride-specific ion channel. Important for reducing fluoride concentration in the cell, thus reducing its toxicity. The sequence is that of Fluoride-specific ion channel FluC from Neisseria meningitidis serogroup C / serotype 2a (strain ATCC 700532 / DSM 15464 / FAM18).